The chain runs to 671 residues: DNA ligase (671 aa).

NAD(+)-binding positions include 32 to 36, 81 to 82, and Glu-113; these read DAEYD and SL. The active-site N6-AMP-lysine intermediate is the Lys-115. NAD(+)-binding residues include Arg-136, Glu-173, Lys-290, and Lys-314. The Zn(2+) site is built by Cys-408, Cys-411, Cys-426, and Cys-432. The BRCT domain occupies 593-671; the sequence is EIDSPFAGKT…EAEMLRLLGS (79 aa).

The protein belongs to the NAD-dependent DNA ligase family. LigA subfamily. Mg(2+) is required as a cofactor. Mn(2+) serves as cofactor.

The catalysed reaction is NAD(+) + (deoxyribonucleotide)n-3'-hydroxyl + 5'-phospho-(deoxyribonucleotide)m = (deoxyribonucleotide)n+m + AMP + beta-nicotinamide D-nucleotide.. Its function is as follows. DNA ligase that catalyzes the formation of phosphodiester linkages between 5'-phosphoryl and 3'-hydroxyl groups in double-stranded DNA using NAD as a coenzyme and as the energy source for the reaction. It is essential for DNA replication and repair of damaged DNA. This is DNA ligase from Shigella sonnei (strain Ss046).